A 411-amino-acid chain; its full sequence is Protein Rv3035 (411 aa).

The polypeptide is Protein Rv3035 (Mycobacterium tuberculosis (strain ATCC 25618 / H37Rv)).